Here is a 407-residue protein sequence, read N- to C-terminus: Chorismate synthase (407 aa).

2 residues coordinate NADP(+): Arg40 and Arg46. Residues 138–140 (RAS) and 259–260 (QA) contribute to the FMN site. Basic and acidic residues predominate over residues 275–284 (RRGSRAHDEM). The tract at residues 275-308 (RRGSRAHDEMYPGTDGVVRSTNRAGGLEGGMTNG) is disordered. FMN-binding positions include Gly303, 318–322 (KPIST), and Arg344.

It belongs to the chorismate synthase family. Homotetramer. It depends on FMNH2 as a cofactor.

The enzyme catalyses 5-O-(1-carboxyvinyl)-3-phosphoshikimate = chorismate + phosphate. It participates in metabolic intermediate biosynthesis; chorismate biosynthesis; chorismate from D-erythrose 4-phosphate and phosphoenolpyruvate: step 7/7. Its function is as follows. Catalyzes the anti-1,4-elimination of the C-3 phosphate and the C-6 proR hydrogen from 5-enolpyruvylshikimate-3-phosphate (EPSP) to yield chorismate, which is the branch point compound that serves as the starting substrate for the three terminal pathways of aromatic amino acid biosynthesis. This reaction introduces a second double bond into the aromatic ring system. In Mycobacterium ulcerans (strain Agy99), this protein is Chorismate synthase.